Consider the following 900-residue polypeptide: Probable 2-oxoadipate dehydrogenase complex component E1 homolog (900 aa).

It belongs to the alpha-ketoglutarate dehydrogenase family. Thiamine diphosphate serves as cofactor.

Its subcellular location is the mitochondrion. It carries out the reaction N(6)-[(R)-lipoyl]-L-lysyl-[protein] + 2-oxoadipate + H(+) = N(6)-[(R)-S(8)-glutaryldihydrolipoyl]-L-lysyl-[protein] + CO2. 2-oxoadipate dehydrogenase (E1a) component of the 2-oxoadipate dehydrogenase complex (OADHC). Participates in the first step, rate limiting for the overall conversion of 2-oxoadipate (alpha-ketoadipate) to glutaryl-CoA and CO(2) catalyzed by the whole OADHC. Catalyzes the irreversible decarboxylation of 2-oxoadipate via the thiamine diphosphate (ThDP) cofactor and subsequent transfer of the decarboxylated acyl intermediate on an oxidized dihydrolipoyl group that is covalently amidated to the E2 enzyme (dihydrolipoyllysine-residue succinyltransferase or DLST). This Dictyostelium discoideum (Social amoeba) protein is Probable 2-oxoadipate dehydrogenase complex component E1 homolog (odhA).